Consider the following 88-residue polypeptide: Acyl-CoA-binding domain-containing protein 7 (88 aa).

An ACB domain is found at 3 to 88 (LQADFDQAAQ…ARELIEKYGI (86 aa)). An acyl-CoA contacts are provided by residues Arg-15, 30–34 (YGLYK), Lys-56, and Tyr-75.

The protein belongs to the ACBD7 family.

Its function is as follows. Binds medium- and long-chain acyl-CoA esters. This Mus musculus (Mouse) protein is Acyl-CoA-binding domain-containing protein 7 (Acbd7).